Reading from the N-terminus, the 75-residue chain is ORF2p protein (75 aa).

The segment at 13–18 (WIGHPV) is important for viral replication in intestinal cells. Residues 23 to 45 (IVYLFVGFTPLTLETLHTLNYII) are membrane-embedded. The disordered stretch occupies residues 53 to 75 (APRSPHSDPARMRIPTQPRKAPL).

It is found in the host cytoplasmic vesicle membrane. Functionally, facilitates virus release from intestinal cells in vitro, possibly through the host autophagic pathway. In Human enterovirus 71 (strain USA/BrCr/1970) (EV71), this protein is ORF2p protein.